The primary structure comprises 138 residues: MSEQPYYETMYILRPDIPEEEVDSHLKKYSEILEKSETEVLDSQMRGKRRLAYPIAKHKEGIYVQLSHKGNGQQVATLERAMRLSEDVIRYITVKQDGPLPTPKPTSKENEPEKEEVKPTEEKTESPSKDEKKEDSKE.

The interval 94 to 138 is disordered; sequence VKQDGPLPTPKPTSKENEPEKEEVKPTEEKTESPSKDEKKEDSKE. A compositionally biased stretch (basic and acidic residues) spans 106 to 138; sequence TSKENEPEKEEVKPTEEKTESPSKDEKKEDSKE.

The protein belongs to the bacterial ribosomal protein bS6 family.

Functionally, binds together with bS18 to 16S ribosomal RNA. This Prochlorococcus marinus (strain NATL2A) protein is Small ribosomal subunit protein bS6.